The primary structure comprises 150 residues: Clitocypin (150 aa).

It belongs to the protease inhibitor I48 family. As to quaternary structure, homodimer. Uniformly expressed throughout the mature fruiting body (at mRNA and protein level).

In terms of biological role, binds and inhibits cysteine proteinases. Inhibits most strongly papain and cathepsin L, more weakly bromelain and cathepsin B while it is completely ineffective against cathepsin H. In Clitocybe nebularis (Clouded agaric), this protein is Clitocypin (Cnc1).